Consider the following 452-residue polypeptide: MDGTIKEALSVVSDDQSLFDSAYGAAAHLPKADMTASGSPDYGQPHKINPLPPQQEWMNQPVRVNVKREYDHMNGSRESPVDCSVSKCGKLVGGGESNTMSYTSYVDEKNGPPPPNMTTNERRVIVPADPTLWTQEHVRQWLEWAIKEYGLMEIDTSFFQNMDGKELCKLNKEDFLRATSLYNTEVLLSHLTYLRESSLLPYNTTSHTDPSSRLNVKEDPSYDSVRRGGWGSNMNSGLNKSPPLAGAQTMSKNTEQRPQPDPYQILGPTSSRLANPGSGQIQLWQFLLELLSDSANASCITWEGTNGEFKMTDPDEVARRWGERKSKPNMNYDKLSRALRYYYDKNIMTKVHGKRYAYKFDFHGIAQALQPHPTESSMYKYPSDISYVPSYHTHQQKVNFVPPHPSSMPVTSSSFFGAASQYWTSPTGGIYPNPNVPRHPNTHVPSHLGSYY.

A Phosphoserine modification is found at Ser-39. The PNT domain maps to 112-198; sequence PPPPNMTTNE…SHLTYLRESS (87 aa). A compositionally biased stretch (polar residues) spans 202-214; sequence YNTTSHTDPSSRL. A disordered region spans residues 202-272; sequence YNTTSHTDPS…YQILGPTSSR (71 aa). Residues 215–226 are compositionally biased toward basic and acidic residues; the sequence is NVKEDPSYDSVR. The span at 248-257 shows a compositional bias: polar residues; the sequence is QTMSKNTEQR. A DNA-binding region (ETS) is located at residues 281–361; the sequence is IQLWQFLLEL…HGKRYAYKFD (81 aa).

It belongs to the ETS family. As to quaternary structure, can form homodimers or heterodimers with ETV6/TEL1.

The protein localises to the nucleus. In terms of biological role, sequence-specific transcriptional activator. Recognizes the DNA sequence 5'-C[CA]GGAAGT-3'. This Bos taurus (Bovine) protein is Friend leukemia integration 1 transcription factor (FLI1).